Reading from the N-terminus, the 551-residue chain is Endolytic murein transglycosylase (551 aa).

Residues 1–187 (MSEKSREEEK…PKKEKKSHVK (187 aa)) lie on the Cytoplasmic side of the membrane. The tract at residues 38-180 (VRTPANEPSA…EGAKPAKPKK (143 aa)) is disordered. 2 stretches are compositionally biased toward low complexity: residues 100–110 (PSSPAEESGSR) and 145–157 (QAGP…ATET). Positions 159–174 (DIIRDTSRRSRREGAK) are enriched in basic and acidic residues. Residues 188 to 208 (AFVISFLVFLALLSAGGYFGY) form a helical membrane-spanning segment. Topologically, residues 209–551 (QYVLDSLLPI…VAEHVNSKLN (343 aa)) are extracellular.

This sequence belongs to the transglycosylase MltG family.

It localises to the cell membrane. It carries out the reaction a peptidoglycan chain = a peptidoglycan chain with N-acetyl-1,6-anhydromuramyl-[peptide] at the reducing end + a peptidoglycan chain with N-acetylglucosamine at the non-reducing end.. Functionally, functions as a peptidoglycan terminase that cleaves nascent peptidoglycan strands endolytically to terminate their elongation. Involved in peripheral peptidoglycan (PG) synthesis. This Streptococcus pneumoniae serotype 2 (strain D39 / NCTC 7466) protein is Endolytic murein transglycosylase.